A 498-amino-acid polypeptide reads, in one-letter code: Glycerol kinase (498 aa).

An ADP-binding site is contributed by threonine 12. Residues threonine 12, threonine 13, and serine 14 each contribute to the ATP site. A sn-glycerol 3-phosphate-binding site is contributed by threonine 12. Arginine 16 lines the ADP pocket. The sn-glycerol 3-phosphate site is built by arginine 82, glutamate 83, and tyrosine 134. 3 residues coordinate glycerol: arginine 82, glutamate 83, and tyrosine 134. Position 230 is a phosphohistidine; by HPr (histidine 230). Aspartate 244 provides a ligand contact to sn-glycerol 3-phosphate. Glycerol is bound by residues aspartate 244 and glutamine 245. Threonine 266, glycine 309, glutamine 313, glycine 410, and asparagine 414 together coordinate ADP. Residues threonine 266, glycine 309, glutamine 313, and glycine 410 each contribute to the ATP site.

It belongs to the FGGY kinase family. In terms of assembly, homotetramer and homodimer (in equilibrium). In terms of processing, the phosphoenolpyruvate-dependent sugar phosphotransferase system (PTS), including enzyme I, and histidine-containing protein (HPr) are required for the phosphorylation, which leads to the activation of the enzyme.

The catalysed reaction is glycerol + ATP = sn-glycerol 3-phosphate + ADP + H(+). It participates in polyol metabolism; glycerol degradation via glycerol kinase pathway; sn-glycerol 3-phosphate from glycerol: step 1/1. Activated by phosphorylation and inhibited by fructose 1,6-bisphosphate (FBP). Functionally, key enzyme in the regulation of glycerol uptake and metabolism. Catalyzes the phosphorylation of glycerol to yield sn-glycerol 3-phosphate. The chain is Glycerol kinase from Staphylococcus aureus (strain COL).